The sequence spans 299 residues: Porphobilinogen deaminase (299 aa).

Cysteine 242 is subject to S-(dipyrrolylmethanemethyl)cysteine.

This sequence belongs to the HMBS family. As to quaternary structure, monomer. It depends on dipyrromethane as a cofactor.

It catalyses the reaction 4 porphobilinogen + H2O = hydroxymethylbilane + 4 NH4(+). It participates in porphyrin-containing compound metabolism; protoporphyrin-IX biosynthesis; coproporphyrinogen-III from 5-aminolevulinate: step 2/4. Its function is as follows. Tetrapolymerization of the monopyrrole PBG into the hydroxymethylbilane pre-uroporphyrinogen in several discrete steps. In Rickettsia prowazekii (strain Madrid E), this protein is Porphobilinogen deaminase (hemC).